The following is a 643-amino-acid chain: Transcription elongation factor B polypeptide 3 (643 aa).

The region spanning 9–82 (DVVRHYQRSI…TKWKAMVAKE (74 aa)) is the TFIIS N-terminal domain. 2 disordered regions span residues 86-289 (IAST…MGAN) and 302-351 (SSKK…SKKP). Residues 94–106 (HNEEDSGKTKSSD) are compositionally biased toward basic and acidic residues. Over residues 114–124 (KGGNSSSGEDL) the composition is skewed to polar residues. The residue at position 120 (Ser-120) is a Phosphoserine. A compositionally biased stretch (basic residues) spans 127 to 136 (SKHKSKHAKS). 2 stretches are compositionally biased toward basic and acidic residues: residues 164–198 (HDKS…KDSS) and 207–237 (SKSE…VKDK). Basic residues predominate over residues 238 to 255 (SSKHKSSSSKSSKRSHSP). A compositionally biased stretch (low complexity) spans 302–336 (SSKKSSSNSKSKFVAKPTAAPSSSALSAPTTAGSS). An activation domain region spans residues 413 to 571 (AQGISSKTMR…PPRSVQRKQE (159 aa)). The tract at residues 439–448 (SLFDLCTRVL) is interacting with Elongin BC complex.

It is found in the nucleus. Functionally, SIII, also known as elongin, is a general transcription elongation factor that increases the RNA polymerase II transcription elongation past template-encoded arresting sites. Subunit A is transcriptionally active and its transcription activity is strongly enhanced by binding to the dimeric complex of the SIII regulatory subunits B and C (elongin BC complex). May play an important role in metamorphosis. The sequence is that of Transcription elongation factor B polypeptide 3 (EloA) from Drosophila melanogaster (Fruit fly).